The following is a 1853-amino-acid chain: DNA-directed RNA polymerase II subunit RPB1 (1853 aa).

Zn(2+) is bound by residues Cys-66, Cys-69, Cys-76, His-79, Cys-106, Cys-109, Cys-149, and Cys-177. The lid loop stretch occupies residues 256 to 268; it reads PAVVTFGSAKNQD. The rudder loop stretch occupies residues 314–331; the sequence is NCIPGLPTATQKGGRPLK. Positions 489, 491, and 493 each coordinate Mg(2+). The interval 827 to 839 is bridging helix; it reads PSEFFFHAMGGRE. Lys-1260 is covalently cross-linked (Glycyl lysine isopeptide (Lys-Gly) (interchain with G-Cter in ubiquitin)). 2 disordered regions span residues 1520–1568 and 1589–1853; these read PWSP…PRTP and SPHY…DPQN. Composition is skewed to low complexity over residues 1589–1811 and 1821–1853; these read SPHY…TPSP and YSPS…DPQN. 26 tandem repeats follow at residues 1592–1598, 1599–1605, 1616–1622, 1623–1629, 1630–1636, 1637–1643, 1644–1650, 1651–1657, 1658–1664, 1665–1671, 1679–1685, 1686–1692, 1693–1699, 1700–1706, 1707–1713, 1717–1723, 1724–1730, 1731–1737, 1752–1758, 1759–1765, 1779–1785, 1786–1792, 1800–1806, 1821–1827, 1828–1834, and 1842–1848. A C-terminal domain (CTD); 26 X 7 AA approximate tandem repeats of Y-[ST]-P-[ST]-S-P-[AGKNQRST] region spans residues 1592–1848; the sequence is YSPTSPSYSP…SPSYSPSSPT (257 aa).

It belongs to the RNA polymerase beta' chain family. Component of the RNA polymerase II (Pol II) complex consisting of 12 subunits. Interacts with sig-7. The tandem 7 residues repeats in the C-terminal domain (CTD) can be highly phosphorylated. The phosphorylation activates Pol II. Phosphorylation occurs mainly at residues 'Ser-2' and 'Ser-5' of the heptapeptide repeat and starts at the 3- to 4-cell embryonic stage. This phosphorylation also occurs in the early stages of oocyte development and is not detected in oocytes arrested at the meiotic diakinesis stage. In the somatic lineage, phosphorylation at 'Ser-2' is mediated by cdk-12 downstream of cdk-9 whereas in the germline lineage cdk-12 phosphorylates 'Ser-2' independently of cdk-9. Phosphorylation is likely mediated by cdk-7. May be dephosphorylated by fcp-1 in diakinetic oocytes and in 1-cell and 2-cell embryos. Dephosphorylated at 'Ser-5' of the heptapeptide repeat by ssup-72. The phosphorylation state is believed to result from the balanced action of site-specific CTD kinases and phosphatase, and a 'CTD code' that specifies the position of Pol II within the transcription cycle has been proposed. Post-translationally, following transcription stress, the elongating form of RNA polymerase II (RNA pol IIo) is polyubiquitinated via 'Lys-63'-linkages on Lys-1260 at DNA damage sites without leading to degradation: ubiquitination promotes RNA pol IIo backtracking to allow access by the transcription-coupled nucleotide excision repair (TC-NER) machinery. Subsequent DEF1-dependent polyubiquitination by the elongin complex via 'Lys-48'-linkages may lead to proteasome-mediated degradation; presumably at stalled RNA pol II where TC-NER has failed, to halt global transcription and enable 'last resort' DNA repair pathways.

It localises to the nucleus. The protein resides in the chromosome. The catalysed reaction is RNA(n) + a ribonucleoside 5'-triphosphate = RNA(n+1) + diphosphate. Its function is as follows. DNA-dependent RNA polymerase catalyzes the transcription of DNA into RNA using the four ribonucleoside triphosphates as substrates. Largest and catalytic component of RNA polymerase II which synthesizes mRNA precursors and many functional non-coding RNAs. Forms the polymerase active center together with the second largest subunit. Pol II is the central component of the basal RNA polymerase II transcription machinery. It is composed of mobile elements that move relative to each other. RPB1 is part of the core element with the central large cleft, the clamp element that moves to open and close the cleft and the jaws that are thought to grab the incoming DNA template. At the start of transcription, a single-stranded DNA template strand of the promoter is positioned within the central active site cleft of Pol II. A bridging helix emanates from RPB1 and crosses the cleft near the catalytic site and is thought to promote translocation of Pol II by acting as a ratchet that moves the RNA-DNA hybrid through the active site by switching from straight to bent conformations at each step of nucleotide addition. During transcription elongation, Pol II moves on the template as the transcript elongates. Elongation is influenced by the phosphorylation status of the C-terminal domain (CTD) of Pol II largest subunit (RPB1), which serves as a platform for assembly of factors that regulate transcription initiation, elongation, termination and mRNA processing. Involved in the transcription of several genes including those involved in embryogenesis. This Caenorhabditis briggsae protein is DNA-directed RNA polymerase II subunit RPB1.